Here is a 360-residue protein sequence, read N- to C-terminus: NAD(P)H-quinone oxidoreductase subunit 1, chloroplastic (360 aa).

9 helical membrane passes run Ile-27–Ile-47, Phe-98–Phe-118, Ile-129–Gly-149, Ala-165–Leu-185, Phe-203–Leu-223, Tyr-248–Ser-268, Leu-269–Leu-289, Ile-297–Ile-317, and Phe-340–Leu-360.

This sequence belongs to the complex I subunit 1 family. In terms of assembly, NDH is composed of at least 16 different subunits, 5 of which are encoded in the nucleus.

It is found in the plastid. It localises to the chloroplast thylakoid membrane. It carries out the reaction a plastoquinone + NADH + (n+1) H(+)(in) = a plastoquinol + NAD(+) + n H(+)(out). The catalysed reaction is a plastoquinone + NADPH + (n+1) H(+)(in) = a plastoquinol + NADP(+) + n H(+)(out). Functionally, NDH shuttles electrons from NAD(P)H:plastoquinone, via FMN and iron-sulfur (Fe-S) centers, to quinones in the photosynthetic chain and possibly in a chloroplast respiratory chain. The immediate electron acceptor for the enzyme in this species is believed to be plastoquinone. Couples the redox reaction to proton translocation, and thus conserves the redox energy in a proton gradient. The sequence is that of NAD(P)H-quinone oxidoreductase subunit 1, chloroplastic from Barbarea verna (Land cress).